We begin with the raw amino-acid sequence, 344 residues long: MKVIKTAPLIPSEIKVLEKEGNRVKISLAPFEFGYAVTLAHPIRRLLLLSSVGYAPVGLKIEGVHHEFDSLRGVTEDVSLFIMNLKNIRFIAKALVGQDSSLENQSVVVDYSFKGPMELRARDLNSEQIEIVNPEMPLATINEDAQLNFSLIIYKGMGYVPSENTRELMPEGYMPLDGSFTPIKKVVYEIENVLVEGDPNYEKIIFDIETDGQIDPYKAFLSAVKVMSKQLGVFGERPIANTEYSGDYAQRDDAKDLSAKIESMNLSARCFNCLDKIGIKYVGELVLMSEEELKGVKNMGKKSYDEIAEKLNDLGYPVGTELSPEQRESLKKRLEKLEDKGGND.

The tract at residues 1–238 (MKVIKTAPLI…KQLGVFGERP (238 aa)) is alpha N-terminal domain (alpha-NTD). The interval 254–344 (AKDLSAKIES…EKLEDKGGND (91 aa)) is alpha C-terminal domain (alpha-CTD).

It belongs to the RNA polymerase alpha chain family. In terms of assembly, homodimer. The RNAP catalytic core consists of 2 alpha, 1 beta, 1 beta' and 1 omega subunit. When a sigma factor is associated with the core the holoenzyme is formed, which can initiate transcription.

The catalysed reaction is RNA(n) + a ribonucleoside 5'-triphosphate = RNA(n+1) + diphosphate. Its function is as follows. DNA-dependent RNA polymerase catalyzes the transcription of DNA into RNA using the four ribonucleoside triphosphates as substrates. The protein is DNA-directed RNA polymerase subunit alpha of Helicobacter pylori (strain ATCC 700392 / 26695) (Campylobacter pylori).